Reading from the N-terminus, the 861-residue chain is DNA mismatch repair protein MutS (861 aa).

618-625 (GPNMGGKS) is an ATP binding site.

This sequence belongs to the DNA mismatch repair MutS family.

In terms of biological role, this protein is involved in the repair of mismatches in DNA. It is possible that it carries out the mismatch recognition step. This protein has a weak ATPase activity. This is DNA mismatch repair protein MutS from Shewanella sp. (strain MR-7).